The sequence spans 360 residues: DNA replication and repair protein RecF (360 aa).

An ATP-binding site is contributed by 33–40 (GENGSGKT).

The protein belongs to the RecF family.

The protein localises to the cytoplasm. In terms of biological role, the RecF protein is involved in DNA metabolism; it is required for DNA replication and normal SOS inducibility. RecF binds preferentially to single-stranded, linear DNA. It also seems to bind ATP. This is DNA replication and repair protein RecF from Rickettsia massiliae (strain Mtu5).